The following is a 450-amino-acid chain: NADH-quinone oxidoreductase subunit H (450 aa).

9 helical membrane-spanning segments follow: residues 18–38, 91–111, 128–148, 169–189, 201–221, 262–282, 292–312, 324–344, and 358–378; these read WWLV…TPLL, ILAP…IPFG, LPVA…GIVL, VISY…DAGT, HTWY…SMVG, VTVS…PFPL, WWPV…FVWL, FMGL…MIVA, and SIAL…LLWK. The disordered stretch occupies residues 387-450; that stretch reads APEKPVEPRG…TGPTQENSDD (64 aa). Basic and acidic residues predominate over residues 390-400; it reads KPVEPRGRAEL. Residues 433–450 are compositionally biased toward polar residues; it reads VSVTGAHSTGPTQENSDD.

It belongs to the complex I subunit 1 family. NDH-1 is composed of 14 different subunits. Subunits NuoA, H, J, K, L, M, N constitute the membrane sector of the complex.

It localises to the cell membrane. It catalyses the reaction a quinone + NADH + 5 H(+)(in) = a quinol + NAD(+) + 4 H(+)(out). Its function is as follows. NDH-1 shuttles electrons from NADH, via FMN and iron-sulfur (Fe-S) centers, to quinones in the respiratory chain. The immediate electron acceptor for the enzyme in this species is believed to be ubiquinone. Couples the redox reaction to proton translocation (for every two electrons transferred, four hydrogen ions are translocated across the cytoplasmic membrane), and thus conserves the redox energy in a proton gradient. This subunit may bind ubiquinone. This Rhodococcus jostii (strain RHA1) protein is NADH-quinone oxidoreductase subunit H.